A 434-amino-acid polypeptide reads, in one-letter code: Enolase (434 aa).

Glutamine 165 provides a ligand contact to (2R)-2-phosphoglycerate. The Proton donor role is filled by glutamate 207. Positions 244, 291, and 318 each coordinate Mg(2+). (2R)-2-phosphoglycerate is bound by residues lysine 343, arginine 372, serine 373, and lysine 394. Lysine 343 serves as the catalytic Proton acceptor.

The protein belongs to the enolase family. It depends on Mg(2+) as a cofactor.

It is found in the cytoplasm. The protein localises to the secreted. Its subcellular location is the cell surface. It carries out the reaction (2R)-2-phosphoglycerate = phosphoenolpyruvate + H2O. It functions in the pathway carbohydrate degradation; glycolysis; pyruvate from D-glyceraldehyde 3-phosphate: step 4/5. Functionally, catalyzes the reversible conversion of 2-phosphoglycerate (2-PG) into phosphoenolpyruvate (PEP). It is essential for the degradation of carbohydrates via glycolysis. This Staphylococcus aureus (strain USA300 / TCH1516) protein is Enolase.